Reading from the N-terminus, the 239-residue chain is Ribosomal RNA small subunit methyltransferase G (239 aa).

S-adenosyl-L-methionine contacts are provided by residues G77, F82, A128 to E129, and R147.

It belongs to the methyltransferase superfamily. RNA methyltransferase RsmG family.

Its subcellular location is the cytoplasm. Functionally, specifically methylates the N7 position of guanine in position 535 of 16S rRNA. In Bacillus cereus (strain AH187), this protein is Ribosomal RNA small subunit methyltransferase G.